Reading from the N-terminus, the 63-residue chain is UPF0370 protein PC1_1167 (63 aa).

The chain crosses the membrane as a helical span at residues 3 to 23 (WLADYWWIILIILIGMLINGI). Positions 37 to 63 (NKPKLPPHRDNNDKWDDEDDDWPKKKP) are disordered.

Belongs to the UPF0370 family.

Its subcellular location is the cell membrane. In Pectobacterium carotovorum subsp. carotovorum (strain PC1), this protein is UPF0370 protein PC1_1167.